The following is a 265-amino-acid chain: Undecaprenyl-diphosphatase (265 aa).

7 helical membrane passes run 42 to 62 (AATF…VLYW), 82 to 102 (GIVL…LLHA), 108 to 128 (LFRP…MILV), 157 to 177 (LALW…MLLG), 181 to 201 (PLAA…ATGY), 217 to 237 (FFLV…KVFV), and 244 to 264 (TLIP…YFMV).

This sequence belongs to the UppP family.

Its subcellular location is the cell inner membrane. The enzyme catalyses di-trans,octa-cis-undecaprenyl diphosphate + H2O = di-trans,octa-cis-undecaprenyl phosphate + phosphate + H(+). Its function is as follows. Catalyzes the dephosphorylation of undecaprenyl diphosphate (UPP). Confers resistance to bacitracin. The sequence is that of Undecaprenyl-diphosphatase from Desulfovibrio desulfuricans (strain ATCC 27774 / DSM 6949 / MB).